The following is a 352-amino-acid chain: Trifunctional sesterterpene/triterpene/sesquarterpene synthase (352 aa).

The protein belongs to the large terpene synthase family.

The catalysed reaction is (2E,6E,10E,14E)-geranylfarnesyl diphosphate = beta-geranylfarnesene + diphosphate. The enzyme catalyses all-trans-hexaprenyl diphosphate = beta-hexaprene + diphosphate. It catalyses the reaction all-trans-heptaprenyl diphosphate = beta-heptaprene + diphosphate. In terms of biological role, catalyzes the conversion of geranylfarnesyl diphosphate (GFPP) and hexaprenyl diphosphate (HexPP) into beta-geranylfarnesene and beta-hexaprene, respectively. Also produces beta-heptaprene from heptaprenyl diphosphate (HepPP) as a minor product. This chain is Trifunctional sesterterpene/triterpene/sesquarterpene synthase, found in Shouchella clausii (Alkalihalobacillus clausii).